The chain runs to 560 residues: MRSDRIKKGFERAPHRSLLRATGLNDGDFEKPFIGIANSHIDIIPGHYYLQEYGRIAKDEIRKAGGVPFEFNTIGVDDGIAMGHEGMRYSLPSRELIADSIETVMNAHQLDALVCIPNCDKIVPGMLMGALRVNVPTVFVSGGPMKAGHLHDGTPIDLNTAFEAVGKRAQGQITDAELYEIECQACPSGGSCSGMFTANSMNVLCEAMGVALPGNGTVLALTPEREALVRRAARRAVEIAADERFRLRNLVNRDAIHNAMVVDMAMGGSSNTVLHMLAISREAGAPLSLRDIEEIAGKVSHIAKIAPSLATVHMEDIHRAGGVPAVLREAARRGGIVREDALTVTGETVGERIRGARTADPELIRPLENAYSPVGGLAVLFGNLAAEGAVVKTAGIQPSMRTFTGEAICFDSQDEAIAGIMGGKVKPGHFVVIRYEGPKGGPGMQEMLSPTSLIMGMGLGESVALVTDGRFSGATRGACVGHVSPEAAEGGVIGLVQDGDRITIDVAARALTVDVSDAELARRREGFRPKRRDPGSSWLRRYAHLVTNAANGAVLRSTDL.

Asp-78 provides a ligand contact to Mg(2+). Cys-119 contacts [2Fe-2S] cluster. Asp-120 and Lys-121 together coordinate Mg(2+). Lys-121 bears the N6-carboxylysine mark. Cys-192 provides a ligand contact to [2Fe-2S] cluster. Glu-446 is a binding site for Mg(2+). Ser-472 serves as the catalytic Proton acceptor.

The protein belongs to the IlvD/Edd family. Homodimer. Requires [2Fe-2S] cluster as cofactor. Mg(2+) serves as cofactor.

It catalyses the reaction (2R)-2,3-dihydroxy-3-methylbutanoate = 3-methyl-2-oxobutanoate + H2O. It carries out the reaction (2R,3R)-2,3-dihydroxy-3-methylpentanoate = (S)-3-methyl-2-oxopentanoate + H2O. It participates in amino-acid biosynthesis; L-isoleucine biosynthesis; L-isoleucine from 2-oxobutanoate: step 3/4. Its pathway is amino-acid biosynthesis; L-valine biosynthesis; L-valine from pyruvate: step 3/4. In terms of biological role, functions in the biosynthesis of branched-chain amino acids. Catalyzes the dehydration of (2R,3R)-2,3-dihydroxy-3-methylpentanoate (2,3-dihydroxy-3-methylvalerate) into 2-oxo-3-methylpentanoate (2-oxo-3-methylvalerate) and of (2R)-2,3-dihydroxy-3-methylbutanoate (2,3-dihydroxyisovalerate) into 2-oxo-3-methylbutanoate (2-oxoisovalerate), the penultimate precursor to L-isoleucine and L-valine, respectively. The sequence is that of Dihydroxy-acid dehydratase from Anaeromyxobacter dehalogenans (strain 2CP-C).